A 245-amino-acid polypeptide reads, in one-letter code: Large ribosomal subunit protein uL3 (245 aa).

At Gln151 the chain carries N5-methylglutamine. Positions 214–245 are disordered; sequence KDAPQPGKYRLANSAAPQPAEADAASDTGAQA. Residues 225-245 show a composition bias toward low complexity; sequence ANSAAPQPAEADAASDTGAQA.

It belongs to the universal ribosomal protein uL3 family. Part of the 50S ribosomal subunit. Forms a cluster with proteins L14 and L19. In terms of processing, methylated by PrmB.

Its function is as follows. One of the primary rRNA binding proteins, it binds directly near the 3'-end of the 23S rRNA, where it nucleates assembly of the 50S subunit. In Methylocella silvestris (strain DSM 15510 / CIP 108128 / LMG 27833 / NCIMB 13906 / BL2), this protein is Large ribosomal subunit protein uL3.